The following is a 207-amino-acid chain: Microtubule-associated protein Jupiter (207 aa).

The residue at position 30 (serine 30) is a Phosphoserine. Residues threonine 41 and threonine 102 each carry the phosphothreonine modification. Phosphoserine is present on residues serine 111, serine 138, and serine 149. 2 disordered regions span residues 129–174 (KGKY…YKAG) and 188–207 (GNQV…SGLW). Residues 136–149 (SGSVSSASSSVSSS) show a composition bias toward low complexity. Residues 150–164 (TENLKINVGNRSDGN) show a composition bias toward polar residues.

Belongs to the MAP Jupiter family.

The protein resides in the nucleus. The protein localises to the cytoplasm. It localises to the cytoskeleton. Its subcellular location is the spindle. Its function is as follows. Binds to all microtubule populations. The sequence is that of Microtubule-associated protein Jupiter from Drosophila grimshawi (Hawaiian fruit fly).